Reading from the N-terminus, the 370-residue chain is DNA replication and repair protein RecF (370 aa).

30–37 (GENAQGKT) is a binding site for ATP.

The protein belongs to the RecF family.

The protein localises to the cytoplasm. Its function is as follows. The RecF protein is involved in DNA metabolism; it is required for DNA replication and normal SOS inducibility. RecF binds preferentially to single-stranded, linear DNA. It also seems to bind ATP. The sequence is that of DNA replication and repair protein RecF from Listeria innocua serovar 6a (strain ATCC BAA-680 / CLIP 11262).